The sequence spans 552 residues: Urocanate hydratase (552 aa).

NAD(+) is bound by residues 49-50 (GG), Q127, 173-175 (GMG), D193, 239-240 (NA), 260-264 (QTSAH), 270-271 (YI), and Y319. C407 is a catalytic residue. G489 provides a ligand contact to NAD(+).

The protein belongs to the urocanase family. NAD(+) is required as a cofactor.

It localises to the cytoplasm. The enzyme catalyses 4-imidazolone-5-propanoate = trans-urocanate + H2O. It functions in the pathway amino-acid degradation; L-histidine degradation into L-glutamate; N-formimidoyl-L-glutamate from L-histidine: step 2/3. In terms of biological role, catalyzes the conversion of urocanate to 4-imidazolone-5-propionate. This is Urocanate hydratase from Bacillus cereus (strain AH820).